We begin with the raw amino-acid sequence, 362 residues long: Glutaminase-asparaginase (362 aa).

The N-terminal stretch at 1–25 (MNAALKTFAPSALALLLILPSSASA) is a signal peptide. The Asparaginase/glutaminase domain occupies 35-362 (ANVVILATGG…KELQRIFWEY (328 aa)). The Acyl-ester intermediate role is filled by threonine 45. Substrate contacts are provided by residues serine 92 and 125–126 (TD).

This sequence belongs to the asparaginase 1 family. Homotetramer.

The protein localises to the periplasm. It carries out the reaction L-glutamine + H2O = L-glutamate + NH4(+). The enzyme catalyses L-asparagine + H2O = L-aspartate + NH4(+). This is Glutaminase-asparaginase (ansB) from Pseudomonas putida (strain ATCC 47054 / DSM 6125 / CFBP 8728 / NCIMB 11950 / KT2440).